The primary structure comprises 186 residues: Proline-rich protein 3 (186 aa).

Positions 1–97 (MPKRKKQNQP…LGPRSSPYGR (97 aa)) are disordered. Pro residues-rich tracts occupy residues 33-44 (MGPPSLLGPPPM) and 67-79 (MIPP…PPPR). The C3H1-type zinc-finger motif lies at 153-181 (KSDRPVCRHFSKKGHCRYEDHCAFYHPGV).

The chain is Proline-rich protein 3 (Prr3) from Rattus norvegicus (Rat).